A 362-amino-acid chain; its full sequence is Caveolae-associated protein 4 (362 aa).

Residues 1 to 24 (MEHNGSASNAGKIHQNRLSSVTED) are disordered. Residues 100–120 (IKDVKARVEKQQVRVTKVETK) adopt a coiled-coil conformation. Ser-152, Ser-171, and Ser-172 each carry phosphoserine. Residues 227-255 (PERRERLRQSGERLRQSGERLRQSGERFK) show a composition bias toward basic and acidic residues. Positions 227-261 (PERRERLRQSGERLRQSGERLRQSGERFKKSISNA) are disordered. A Phosphotyrosine modification is found at Tyr-324. Thr-334 carries the post-translational modification Phosphothreonine. Ser-353 carries the post-translational modification Phosphoserine.

Belongs to the CAVIN family. As to quaternary structure, component of the CAVIN complex composed of CAVIN1, CAVIN2, CAVIN3 and CAVIN4. Interacts with CAVIN1, CAV3, ADRA1A and ADRA1B. Interacts with CAVIN2; this augments the transactivation of NPPA. Interacts with MAPK1 and MAPK3. As to expression, expressed at much higher levels in cardiomyocytes than in non-cardiomyocytes.

The protein resides in the cytoplasm. It is found in the myofibril. It localises to the sarcomere. Its subcellular location is the cytosol. The protein localises to the cell membrane. The protein resides in the sarcolemma. It is found in the membrane. It localises to the caveola. Modulates the morphology of formed caveolae in cardiomyocytes, but is not required for caveolar formation. Facilitates the recruitment of MAPK1/3 to caveolae within cardiomyocytes and regulates alpha-1 adrenergic receptor-induced hypertrophic responses in cardiomyocytes through MAPK1/3 activation. Contributes to proper membrane localization and stabilization of caveolin-3 (CAV3) in cardiomyocytes. Induces RHOA activation and activates NPPA transcription and myofibrillar organization through the Rho/ROCK signaling pathway. The chain is Caveolae-associated protein 4 from Rattus norvegicus (Rat).